We begin with the raw amino-acid sequence, 397 residues long: Serpin B10 (397 aa).

The Nuclear localization signal motif lies at 74 to 77 (KKRK).

The protein belongs to the serpin family. Ov-serpin subfamily.

The protein resides in the nucleus. The protein localises to the cytoplasm. Its function is as follows. Protease inhibitor that may play a role in the regulation of protease activities during hematopoiesis and apoptosis induced by TNF. May regulate protease activities in the cytoplasm and in the nucleus. This is Serpin B10 (SERPINB10) from Otolemur garnettii (Small-eared galago).